Here is a 611-residue protein sequence, read N- to C-terminus: UPF0508 protein SCY_3114 (611 aa).

Belongs to the UPF0508 family.

The protein is UPF0508 protein SCY_3114 of Saccharomyces cerevisiae (strain YJM789) (Baker's yeast).